Reading from the N-terminus, the 364-residue chain is tRNA 2-selenouridine synthase (364 aa).

The Rhodanese domain occupies 14–137; it reads LIADTPIIDV…LRQTAIQATI (124 aa). Residue C97 is the S-selanylcysteine intermediate of the active site.

Belongs to the SelU family. Monomer.

The enzyme catalyses 5-methylaminomethyl-2-thiouridine(34) in tRNA + selenophosphate + (2E)-geranyl diphosphate + H2O + H(+) = 5-methylaminomethyl-2-selenouridine(34) in tRNA + (2E)-thiogeraniol + phosphate + diphosphate. It catalyses the reaction 5-methylaminomethyl-2-thiouridine(34) in tRNA + (2E)-geranyl diphosphate = 5-methylaminomethyl-S-(2E)-geranyl-thiouridine(34) in tRNA + diphosphate. It carries out the reaction 5-methylaminomethyl-S-(2E)-geranyl-thiouridine(34) in tRNA + selenophosphate + H(+) = 5-methylaminomethyl-2-(Se-phospho)selenouridine(34) in tRNA + (2E)-thiogeraniol. The catalysed reaction is 5-methylaminomethyl-2-(Se-phospho)selenouridine(34) in tRNA + H2O = 5-methylaminomethyl-2-selenouridine(34) in tRNA + phosphate. In terms of biological role, involved in the post-transcriptional modification of the uridine at the wobble position (U34) of tRNA(Lys), tRNA(Glu) and tRNA(Gln). Catalyzes the conversion of 2-thiouridine (S2U-RNA) to 2-selenouridine (Se2U-RNA). Acts in a two-step process involving geranylation of 2-thiouridine (S2U) to S-geranyl-2-thiouridine (geS2U) and subsequent selenation of the latter derivative to 2-selenouridine (Se2U) in the tRNA chain. The sequence is that of tRNA 2-selenouridine synthase from Shigella dysenteriae serotype 1 (strain Sd197).